The following is an 874-amino-acid chain: Bifunctional uridylyltransferase/uridylyl-removing enzyme (874 aa).

The interval 1-332 (MPLQSPLTFS…NGGATENAEI (332 aa)) is uridylyltransferase. A uridylyl-removing region spans residues 333-692 (LDADFQRRGS…ISKKATRGGT (360 aa)). The HD domain occupies 451-573 (VDEHSIRLLK…VRDEESLEYL (123 aa)). ACT domains lie at 693–777 (EVFV…RTPN) and 800–874 (LMEF…AVTA).

It belongs to the GlnD family. Mg(2+) is required as a cofactor.

The catalysed reaction is [protein-PII]-L-tyrosine + UTP = [protein-PII]-uridylyl-L-tyrosine + diphosphate. The enzyme catalyses [protein-PII]-uridylyl-L-tyrosine + H2O = [protein-PII]-L-tyrosine + UMP + H(+). Its activity is regulated as follows. Uridylyltransferase (UTase) activity is inhibited by glutamine, while glutamine activates uridylyl-removing (UR) activity. Its function is as follows. Modifies, by uridylylation and deuridylylation, the PII regulatory proteins (GlnB and homologs), in response to the nitrogen status of the cell that GlnD senses through the glutamine level. Under low glutamine levels, catalyzes the conversion of the PII proteins and UTP to PII-UMP and PPi, while under higher glutamine levels, GlnD hydrolyzes PII-UMP to PII and UMP (deuridylylation). Thus, controls uridylylation state and activity of the PII proteins, and plays an important role in the regulation of nitrogen assimilation and metabolism. The protein is Bifunctional uridylyltransferase/uridylyl-removing enzyme of Vibrio parahaemolyticus serotype O3:K6 (strain RIMD 2210633).